Here is a 130-residue protein sequence, read N- to C-terminus: Small ribosomal subunit protein uS9 (130 aa).

Residues 107 to 130 form a disordered region; the sequence is DSREVERKKVGLRKARRRPQFSKR. Positions 116–130 are enriched in basic residues; that stretch reads VGLRKARRRPQFSKR.

It belongs to the universal ribosomal protein uS9 family.

The chain is Small ribosomal subunit protein uS9 from Marinomonas sp. (strain MWYL1).